The primary structure comprises 123 residues: Small ribosomal subunit protein uS12 (123 aa).

Residues 1 to 28 (MPTIQQLIRNPREPKRTRTKTPALKACP) are disordered. Aspartate 89 bears the 3-methylthioaspartic acid mark. Residues 104–123 (TQPVKNRKQRRSHYGAKKPK) are disordered. The span at 108 to 123 (KNRKQRRSHYGAKKPK) shows a compositional bias: basic residues.

The protein belongs to the universal ribosomal protein uS12 family. Part of the 30S ribosomal subunit. Contacts proteins S8 and S17. May interact with IF1 in the 30S initiation complex.

Its function is as follows. With S4 and S5 plays an important role in translational accuracy. Functionally, interacts with and stabilizes bases of the 16S rRNA that are involved in tRNA selection in the A site and with the mRNA backbone. Located at the interface of the 30S and 50S subunits, it traverses the body of the 30S subunit contacting proteins on the other side and probably holding the rRNA structure together. The combined cluster of proteins S8, S12 and S17 appears to hold together the shoulder and platform of the 30S subunit. This is Small ribosomal subunit protein uS12 from Hyphomonas neptunium (strain ATCC 15444).